Reading from the N-terminus, the 623-residue chain is Trehalase (623 aa).

This sequence belongs to the glycosyl hydrolase 15 family. Monomer.

It carries out the reaction alpha,alpha-trehalose + H2O = alpha-D-glucose + beta-D-glucose. The protein operates within glycan degradation; trehalose degradation; D-glucose from alpha,alpha-trehalose: step 1/1. Its activity is regulated as follows. Inhibited by validamycin A. Functionally, catalyzes the hydrolysis of alpha,alpha-trehalose into two molecules of D-glucose. The polypeptide is Trehalase (Thermoplasma volcanium (strain ATCC 51530 / DSM 4299 / JCM 9571 / NBRC 15438 / GSS1)).